Consider the following 347-residue polypeptide: Ketol-acid reductoisomerase (NADP(+)) (347 aa).

Residues 3–182 form the KARI N-terminal Rossmann domain; sequence TKMFYDKDID…GSGRAGILET (180 aa). Residues 26–29, Arg-49, Ser-53, and 83–86 contribute to the NADP(+) site; these read YGAQ and DELQ. The active site involves His-108. Gly-134 is an NADP(+) binding site. The 146-residue stretch at 183–328 folds into the KARI C-terminal knotted domain; that stretch reads TFEEETTEDL…KKVRAMMPWI (146 aa). 4 residues coordinate Mg(2+): Asp-191, Glu-195, Glu-227, and Glu-231. Ser-252 lines the substrate pocket.

Belongs to the ketol-acid reductoisomerase family. Mg(2+) serves as cofactor.

The catalysed reaction is (2R)-2,3-dihydroxy-3-methylbutanoate + NADP(+) = (2S)-2-acetolactate + NADPH + H(+). It carries out the reaction (2R,3R)-2,3-dihydroxy-3-methylpentanoate + NADP(+) = (S)-2-ethyl-2-hydroxy-3-oxobutanoate + NADPH + H(+). Its pathway is amino-acid biosynthesis; L-isoleucine biosynthesis; L-isoleucine from 2-oxobutanoate: step 2/4. It functions in the pathway amino-acid biosynthesis; L-valine biosynthesis; L-valine from pyruvate: step 2/4. Functionally, involved in the biosynthesis of branched-chain amino acids (BCAA). Catalyzes an alkyl-migration followed by a ketol-acid reduction of (S)-2-acetolactate (S2AL) to yield (R)-2,3-dihydroxy-isovalerate. In the isomerase reaction, S2AL is rearranged via a Mg-dependent methyl migration to produce 3-hydroxy-3-methyl-2-ketobutyrate (HMKB). In the reductase reaction, this 2-ketoacid undergoes a metal-dependent reduction by NADPH to yield (R)-2,3-dihydroxy-isovalerate. The polypeptide is Ketol-acid reductoisomerase (NADP(+)) (Leuconostoc mesenteroides subsp. mesenteroides (strain ATCC 8293 / DSM 20343 / BCRC 11652 / CCM 1803 / JCM 6124 / NCDO 523 / NBRC 100496 / NCIMB 8023 / NCTC 12954 / NRRL B-1118 / 37Y)).